The sequence spans 211 residues: Large ribosomal subunit protein uL4 (211 aa).

The segment at 40–87 (QQAHTRQGTASTLTRSEVRGGGRKPYKQKGTGRARQGSIRTPLRPGGG) is disordered. The span at 41–54 (QAHTRQGTASTLTR) shows a compositional bias: polar residues. Positions 60 to 71 (GGRKPYKQKGTG) are enriched in basic residues.

The protein belongs to the universal ribosomal protein uL4 family. Part of the 50S ribosomal subunit.

Functionally, one of the primary rRNA binding proteins, this protein initially binds near the 5'-end of the 23S rRNA. It is important during the early stages of 50S assembly. It makes multiple contacts with different domains of the 23S rRNA in the assembled 50S subunit and ribosome. In terms of biological role, forms part of the polypeptide exit tunnel. The polypeptide is Large ribosomal subunit protein uL4 (Synechococcus sp. (strain WH7803)).